Reading from the N-terminus, the 115-residue chain is U3-lycotoxin-Ls1f (115 aa).

An N-terminal signal peptide occupies residues 1–20; it reads MKFVLLFGVLLVTLFSYSSA. Positions 21 to 44 are excised as a propeptide; that stretch reads EMLDDFDQADEDELLSLIEKEEAR. Intrachain disulfides connect cysteine 48-cysteine 63, cysteine 55-cysteine 72, cysteine 62-cysteine 87, and cysteine 74-cysteine 85.

This sequence belongs to the neurotoxin 19 (CSTX) family. 01 subfamily. In terms of tissue distribution, expressed by the venom gland.

Its subcellular location is the secreted. This Lycosa singoriensis (Wolf spider) protein is U3-lycotoxin-Ls1f.